Here is a 103-residue protein sequence, read N- to C-terminus: Large ribosomal subunit protein bL21 (103 aa).

Belongs to the bacterial ribosomal protein bL21 family. Part of the 50S ribosomal subunit. Contacts protein L20.

Its function is as follows. This protein binds to 23S rRNA in the presence of protein L20. The polypeptide is Large ribosomal subunit protein bL21 (Polynucleobacter necessarius subsp. necessarius (strain STIR1)).